The sequence spans 211 residues: Ribosomal RNA small subunit methyltransferase G (211 aa).

Residues G75, L80, 130 to 131, and R145 each bind S-adenosyl-L-methionine; that span reads VE.

The protein belongs to the methyltransferase superfamily. RNA methyltransferase RsmG family.

The protein resides in the cytoplasm. It catalyses the reaction guanosine(527) in 16S rRNA + S-adenosyl-L-methionine = N(7)-methylguanosine(527) in 16S rRNA + S-adenosyl-L-homocysteine. Its function is as follows. Specifically methylates the N7 position of guanine in position 527 of 16S rRNA. The polypeptide is Ribosomal RNA small subunit methyltransferase G (Aromatoleum aromaticum (strain DSM 19018 / LMG 30748 / EbN1) (Azoarcus sp. (strain EbN1))).